The primary structure comprises 244 residues: Cobalt transport protein CbiM (244 aa).

Residues 1–28 (MKKLWKFIPFVLMGVIYFTLTNPESAHA) form the signal peptide. A run of 6 helical transmembrane segments spans residues 37–57 (PVKW…LGLI), 71–91 (LLLA…IPSV), 103–123 (LATV…VLLF), 135–155 (TLGA…FVVY), 166–186 (SVSI…TTSV), and 206–226 (FMAI…LLTV).

The protein belongs to the CbiM family. In terms of assembly, forms an energy-coupling factor (ECF) transporter complex composed of an ATP-binding protein (A component, CbiO), a transmembrane protein (T component, CbiQ) and 2 possible substrate-capture proteins (S components, CbiM and CbiN) of unknown stoichimetry.

The protein resides in the cell membrane. It functions in the pathway cofactor biosynthesis; adenosylcobalamin biosynthesis. Functionally, part of the energy-coupling factor (ECF) transporter complex CbiMNOQ involved in cobalt import. The polypeptide is Cobalt transport protein CbiM (Listeria seeligeri serovar 1/2b (strain ATCC 35967 / DSM 20751 / CCM 3970 / CCUG 15530 / CIP 100100 / LMG 11386 / NCTC 11856 / SLCC 3954 / 1120)).